A 411-amino-acid polypeptide reads, in one-letter code: LL-diaminopimelate aminotransferase (411 aa).

The substrate site is built by Tyr-16 and Gly-43. Residues Tyr-73, 109–110 (AK), Tyr-133, Asn-188, Tyr-219, and 247–249 (SFS) contribute to the pyridoxal 5'-phosphate site. Residues Lys-110, Tyr-133, and Asn-188 each coordinate substrate. Lys-250 is modified (N6-(pyridoxal phosphate)lysine). The pyridoxal 5'-phosphate site is built by Arg-258 and Asn-293. Residues Asn-293 and Arg-389 each contribute to the substrate site.

Belongs to the class-I pyridoxal-phosphate-dependent aminotransferase family. LL-diaminopimelate aminotransferase subfamily. Homodimer. It depends on pyridoxal 5'-phosphate as a cofactor.

It carries out the reaction (2S,6S)-2,6-diaminopimelate + 2-oxoglutarate = (S)-2,3,4,5-tetrahydrodipicolinate + L-glutamate + H2O + H(+). The protein operates within amino-acid biosynthesis; L-lysine biosynthesis via DAP pathway; LL-2,6-diaminopimelate from (S)-tetrahydrodipicolinate (aminotransferase route): step 1/1. Functionally, involved in the synthesis of meso-diaminopimelate (m-DAP or DL-DAP), required for both lysine and peptidoglycan biosynthesis. Catalyzes the direct conversion of tetrahydrodipicolinate to LL-diaminopimelate. The polypeptide is LL-diaminopimelate aminotransferase (Methanobrevibacter smithii (strain ATCC 35061 / DSM 861 / OCM 144 / PS)).